The sequence spans 287 residues: Lactamase-like protein nscB (287 aa).

4 residues coordinate Zn(2+): His62, His64, Asp66, and His67. Asp66 serves as the catalytic Proton donor/acceptor.

Belongs to the metallo-beta-lactamase superfamily. Zn(2+) is required as a cofactor.

The protein operates within secondary metabolite biosynthesis. In terms of biological role, lactamase-like protein; part of the gene cluster that mediates the biosynthesis of neosartoricin B, a prenylated anthracenone that probably exhibits T-cell antiproliferative activity, suggestive of a physiological role as an immunosuppressive agent. The non-reducing polyketide synthase nscA probably synthesizes and cyclizes the decaketide backbone. The hydrolase nscB then mediates the product release through hydrolysis followed by spontaneous decarboxylation. The prenyltransferase nscD catalyzes the addition of the dimethylallyl group to the aromatic C5. The FAD-dependent monooxygenase nscC is then responsible for the stereospecific hydroxylation at C2. Neosartoricin B can be converted into two additional compounds neosartoricins C and D. Neosartoricin C is a spirocyclic compound that is cyclized through the attack of C3 hydroxyl on C14, followed by dehydration. On the other hand, neosartoricin D is a further cyclized compound in which attack of C2 on C14 in neosartoricin C results in the formation of the acetal-containing dioxabicyclo-octanone ring. Both of these compounds are novel and possibly represent related metabolites of the gene cluster. The sequence is that of Lactamase-like protein nscB from Trichophyton verrucosum (strain HKI 0517).